The primary structure comprises 148 residues: Natriuretic peptide BF131 (148 aa).

Residues 1–27 form the signal peptide; that stretch reads MVGPSRLAGGGLLLLLLLALLPLALDG. The propeptide occupies 28–83; sequence KPAPPPQALPKDPAAASAAERIMRALLPDSKSSRPATDRMVHPEHQAGGGDTRRLQ. 2 disordered regions span residues 54 to 83 and 105 to 127; these read LPDSKSSRPATDRMVHPEHQAGGGDTRRLQ and TSDMGCRHRKDPPRAPPAAPSAA. Basic and acidic residues predominate over residues 63 to 83; that stretch reads ATDRMVHPEHQAGGGDTRRLQ. An intrachain disulfide couples C94 to C110. The propeptide occupies 130–148; that stretch reads AVTWLIRDLRADSKQSRAA.

This sequence belongs to the natriuretic peptide family. Expressed by the venom gland.

Its subcellular location is the secreted. In terms of biological role, natriuretic peptide that dose-dependently induces the rapid relaxation of rat aortic strips phenylephrine-precontracted. Acts by stimulating cGMP production in a dose-dependent manner (by probably activating NPR1 and/or NPR2). May also show potent hypotensive effects. This is Natriuretic peptide BF131 from Bungarus flaviceps flaviceps (Red-headed krait).